Consider the following 152-residue polypeptide: Endoribonuclease YbeY (152 aa).

Zn(2+) contacts are provided by histidine 113, histidine 117, and histidine 123.

The protein belongs to the endoribonuclease YbeY family. Zn(2+) is required as a cofactor.

It localises to the cytoplasm. In terms of biological role, single strand-specific metallo-endoribonuclease involved in late-stage 70S ribosome quality control and in maturation of the 3' terminus of the 16S rRNA. The sequence is that of Endoribonuclease YbeY from Janthinobacterium sp. (strain Marseille) (Minibacterium massiliensis).